A 318-amino-acid chain; its full sequence is Thymidylate synthase (318 aa).

DUMP is bound by residues Arg-25 and 180-181 (RR). Cys-200 (nucleophile) is an active-site residue. Residues 220-223 (RSGD), Asn-231, and 261-263 (HIY) each bind dUMP. Asp-223 is a binding site for (6R)-5,10-methylene-5,6,7,8-tetrahydrofolate. A (6R)-5,10-methylene-5,6,7,8-tetrahydrofolate-binding site is contributed by Ala-317.

The protein belongs to the thymidylate synthase family. Bacterial-type ThyA subfamily. As to quaternary structure, homodimer.

The protein resides in the cytoplasm. It catalyses the reaction dUMP + (6R)-5,10-methylene-5,6,7,8-tetrahydrofolate = 7,8-dihydrofolate + dTMP. Its pathway is pyrimidine metabolism; dTTP biosynthesis. Functionally, catalyzes the reductive methylation of 2'-deoxyuridine-5'-monophosphate (dUMP) to 2'-deoxythymidine-5'-monophosphate (dTMP) while utilizing 5,10-methylenetetrahydrofolate (mTHF) as the methyl donor and reductant in the reaction, yielding dihydrofolate (DHF) as a by-product. This enzymatic reaction provides an intracellular de novo source of dTMP, an essential precursor for DNA biosynthesis. This is Thymidylate synthase from Bacillus cereus (strain ATCC 14579 / DSM 31 / CCUG 7414 / JCM 2152 / NBRC 15305 / NCIMB 9373 / NCTC 2599 / NRRL B-3711).